The chain runs to 621 residues: tRNA uridine 5-carboxymethylaminomethyl modification enzyme MnmG (621 aa).

9–14 (GGGHAG) serves as a coordination point for FAD. 270–284 (GPRYCPSIEDKIVKF) contributes to the NAD(+) binding site.

Belongs to the MnmG family. As to quaternary structure, homodimer. Heterotetramer of two MnmE and two MnmG subunits. It depends on FAD as a cofactor.

It is found in the cytoplasm. Its function is as follows. NAD-binding protein involved in the addition of a carboxymethylaminomethyl (cmnm) group at the wobble position (U34) of certain tRNAs, forming tRNA-cmnm(5)s(2)U34. The sequence is that of tRNA uridine 5-carboxymethylaminomethyl modification enzyme MnmG from Borrelia garinii subsp. bavariensis (strain ATCC BAA-2496 / DSM 23469 / PBi) (Borreliella bavariensis).